Consider the following 688-residue polypeptide: Glycine--tRNA ligase beta subunit (688 aa).

Belongs to the class-II aminoacyl-tRNA synthetase family. In terms of assembly, tetramer of two alpha and two beta subunits.

The protein resides in the cytoplasm. The enzyme catalyses tRNA(Gly) + glycine + ATP = glycyl-tRNA(Gly) + AMP + diphosphate. The protein is Glycine--tRNA ligase beta subunit of Clostridioides difficile (strain 630) (Peptoclostridium difficile).